The sequence spans 138 residues: MRTLWIVAVCLMGVEGHLTQFGDMINKKTGTFGLLSYVYYGCYCGLGGKGKPQDATDRCCFVHDCCYGTVNGCDPKLSTYSYSFQNGDIVCGDDDPCLRAVCECDRVAAICFGENMNTYDKKYMLYSFFDCMEESEKC.

The signal sequence occupies residues 1 to 16 (MRTLWIVAVCLMGVEG). Disulfide bonds link Cys-42-Cys-131, Cys-44-Cys-60, Cys-59-Cys-111, Cys-65-Cys-138, Cys-66-Cys-104, Cys-73-Cys-97, and Cys-91-Cys-102. The Ca(2+) site is built by Tyr-43, Gly-45, and Gly-47. His-63 is an active-site residue. Asp-64 is a binding site for Ca(2+). Asp-105 is a catalytic residue.

The protein belongs to the phospholipase A2 family. Group II subfamily. D49 sub-subfamily. Ca(2+) serves as cofactor. In terms of tissue distribution, expressed by the venom gland.

Its subcellular location is the secreted. It catalyses the reaction a 1,2-diacyl-sn-glycero-3-phosphocholine + H2O = a 1-acyl-sn-glycero-3-phosphocholine + a fatty acid + H(+). In terms of biological role, snake venom phospholipase A2 (PLA2) that causes a sudden decrease of arterial blood pressure when injected into rat, but is not lethal. When co-injected with an uncharacterized basic protein (which did not show any enzymatic activity, but also causes a drop in blood pressure), this synergistical mixture is lethal. PLA2 catalyzes the calcium-dependent hydrolysis of the 2-acyl groups in 3-sn-phosphoglycerides. The sequence is that of Acidic phospholipase A2 VpaPLA2 from Daboia palaestinae (Palestine viper).